A 727-amino-acid polypeptide reads, in one-letter code: ABC transporter G family member STR2 (727 aa).

The Cytoplasmic portion of the chain corresponds to 1–475; it reads MKTQGLELET…NFTNIRRTPE (475 aa). The 251-residue stretch at 25 to 275 folds into the ABC transporter domain; it reads LEFESLTYTV…LNRMGRKIPK (251 aa). 69–76 is an ATP binding site; sequence GPSGAGKS. Residues 476–496 form a helical membrane-spanning segment; the sequence is LFLSRLMVLTFMGVMMATMFH. The Extracellular segment spans residues 497–510; it reads NPKNTLQGITNRLS. A helical transmembrane segment spans residues 511-531; the sequence is FFIFTVCLFFFSSNDAVPAFI. Residues 532 to 559 are Cytoplasmic-facing; the sequence is QERFIFIRETSHNAYRASCYTIASLITH. Residues 560 to 580 traverse the membrane as a helical segment; sequence MPFLALQALAYAAIVWFALEL. Residues 581 to 583 lie on the Extracellular side of the membrane; the sequence is RGP. A helical membrane pass occupies residues 584–604; the sequence is FIYFFLVLFISLLSTNSFVVF. The Cytoplasmic segment spans residues 605–612; that stretch reads VSSIVPNY. The chain crosses the membrane as a helical span at residues 613–633; that stretch reads ILGYAAVIAFTALFFLFCGYF. Residues 634 to 699 are Extracellular-facing; that stretch reads LSSEDIPLYW…GTEEIKKRNN (66 aa). The N-linked (GlcNAc...) asparagine glycan is linked to Asn-667. Residues 700–720 traverse the membrane as a helical segment; sequence VLIMLGWAVLYRILFYIILRF. The Cytoplasmic segment spans residues 721–727; that stretch reads ASKNQRS.

It belongs to the ABC transporter superfamily. ABCG family. Stunted arbuscule (STR) subfamily. Heterodimerizes with STR; the resulting transporter is located in the peri-arbuscular membrane. Expressed constitutively in the vascular tissue of roots.

It localises to the cell membrane. Together with STR, required for arbuscule development in arbuscular mycorrhizal symbiosis. This Medicago truncatula (Barrel medic) protein is ABC transporter G family member STR2.